Here is a 265-residue protein sequence, read N- to C-terminus: Protein Rv2993c (265 aa).

A divalent metal cation is bound by residues glutamate 114, glutamate 116, and aspartate 145.

It in the C-terminal section; belongs to the FAH family. A divalent metal cation serves as cofactor.

This chain is Protein Rv2993c, found in Mycobacterium tuberculosis (strain ATCC 25618 / H37Rv).